Consider the following 111-residue polypeptide: Putative membrane protein insertion efficiency factor (111 aa).

The protein belongs to the UPF0161 family.

Its subcellular location is the cell inner membrane. Its function is as follows. Could be involved in insertion of integral membrane proteins into the membrane. The polypeptide is Putative membrane protein insertion efficiency factor (Methylobacterium nodulans (strain LMG 21967 / CNCM I-2342 / ORS 2060)).